We begin with the raw amino-acid sequence, 472 residues long: Inhibitor of Apoptosis OPG037 (472 aa).

6 ANK repeats span residues 97–126 (DGNYPLHIASKINNNRIVAMLLTHGADPNA), 130–161 (HNKTPLYYLSGTDDEVIERINLLVQYGAKINN), 233–263 (DGNTPLHIVCSKTVKNVDIIDLLLPSTDVNK), 267–297 (FGDSPLTLLIKTLSPAHLINKLLSTSNVITD), 322–351 (YDSTDFKMAVEVGSIRCVKYLLDNDIICED), and 353–377 (MYYAVLSEYETMVDYLLFNHFSVDF).

This sequence belongs to the orthopoxvirus OPG037 protein family. As to quaternary structure, may interact with host caspase-9-Apaf-1 complex.

The protein localises to the host cytoplasm. In terms of biological role, inhibits host apoptosis. Acts by associating with host apoptosome. In Vaccinia virus (strain Western Reserve) (VACV), this protein is Inhibitor of Apoptosis OPG037 (OPG037).